Here is a 202-residue protein sequence, read N- to C-terminus: Casparian strip membrane protein 1 (202 aa).

The Cytoplasmic portion of the chain corresponds to 1–42; the sequence is MEKNKSTAIEIAESSKESKGKAPLLAAAVGHDRAAGYKRGVS. A helical membrane pass occupies residues 43-63; the sequence is IFDLFLRISAATAALAATIVM. The Extracellular segment spans residues 64 to 90; the sequence is GTTEQTLPFFTQFFQFRAQYDDLPTFT. The helical transmembrane segment at 91–111 threads the bilayer; the sequence is FFVVGMAIVTGYLILSVPFSI. At 112-130 the chain is on the cytoplasmic side; that stretch reads VCIARPVAIGPRFLLIVGD. The chain crosses the membrane as a helical span at residues 131-151; it reads TLKAVLATSAAGSSAAIVYLA. Topologically, residues 152 to 173 are extracellular; sequence HNGNSDANWLDICQQFNDFCQR. Residues 174–194 form a helical membrane-spanning segment; the sequence is VSGAVVAAFVAVVLLIFLIVL. At 195-202 the chain is on the cytoplasmic side; the sequence is SAMALRKN.

This sequence belongs to the Casparian strip membrane proteins (CASP) family. As to quaternary structure, homodimer and heterodimers.

It is found in the cell membrane. In terms of biological role, regulates membrane-cell wall junctions and localized cell wall deposition. Required for establishment of the Casparian strip membrane domain (CSD) and the subsequent formation of Casparian strips, a cell wall modification of the root endodermis that determines an apoplastic barrier between the intraorganismal apoplasm and the extraorganismal apoplasm and prevents lateral diffusion. In Striga hermonthica (Purple witchweed), this protein is Casparian strip membrane protein 1.